Consider the following 802-residue polypeptide: Leucine--tRNA ligase (802 aa).

A 'HIGH' region motif is present at residues Pro-39 to His-50. Positions Lys-574 to Ser-578 match the 'KMSKS' region motif. Lys-577 provides a ligand contact to ATP.

Belongs to the class-I aminoacyl-tRNA synthetase family.

The protein resides in the cytoplasm. It catalyses the reaction tRNA(Leu) + L-leucine + ATP = L-leucyl-tRNA(Leu) + AMP + diphosphate. This is Leucine--tRNA ligase from Macrococcus caseolyticus (strain JCSC5402) (Macrococcoides caseolyticum).